A 254-amino-acid polypeptide reads, in one-letter code: Imidazole glycerol phosphate synthase subunit HisF (254 aa).

Catalysis depends on residues aspartate 11 and aspartate 130.

The protein belongs to the HisA/HisF family. Heterodimer of HisH and HisF.

It localises to the cytoplasm. It carries out the reaction 5-[(5-phospho-1-deoxy-D-ribulos-1-ylimino)methylamino]-1-(5-phospho-beta-D-ribosyl)imidazole-4-carboxamide + L-glutamine = D-erythro-1-(imidazol-4-yl)glycerol 3-phosphate + 5-amino-1-(5-phospho-beta-D-ribosyl)imidazole-4-carboxamide + L-glutamate + H(+). It participates in amino-acid biosynthesis; L-histidine biosynthesis; L-histidine from 5-phospho-alpha-D-ribose 1-diphosphate: step 5/9. Its function is as follows. IGPS catalyzes the conversion of PRFAR and glutamine to IGP, AICAR and glutamate. The HisF subunit catalyzes the cyclization activity that produces IGP and AICAR from PRFAR using the ammonia provided by the HisH subunit. The polypeptide is Imidazole glycerol phosphate synthase subunit HisF (Oceanobacillus iheyensis (strain DSM 14371 / CIP 107618 / JCM 11309 / KCTC 3954 / HTE831)).